The primary structure comprises 247 residues: Glucosamine-6-phosphate deaminase (247 aa).

Residue Asp-67 is the Proton acceptor; for enolization step of the active site. The active-site For ring-opening step is the Asn-136. His-138 functions as the Proton acceptor; for ring-opening step in the catalytic mechanism. Residue Glu-143 is the For ring-opening step of the active site.

Belongs to the glucosamine/galactosamine-6-phosphate isomerase family. NagB subfamily.

It carries out the reaction alpha-D-glucosamine 6-phosphate + H2O = beta-D-fructose 6-phosphate + NH4(+). Its pathway is amino-sugar metabolism; N-acetylneuraminate degradation; D-fructose 6-phosphate from N-acetylneuraminate: step 5/5. In terms of biological role, catalyzes the reversible isomerization-deamination of glucosamine 6-phosphate (GlcN6P) to form fructose 6-phosphate (Fru6P) and ammonium ion. In Shouchella clausii (strain KSM-K16) (Alkalihalobacillus clausii), this protein is Glucosamine-6-phosphate deaminase.